Here is a 231-residue protein sequence, read N- to C-terminus: MMRIPNRSIQAANIFFSSGAILLLIAGLIMENWVELIPKVRKDKVTHSPWLGCCPPFWPEESLEAIRRMMMMSLNISIYLNLIIGLQFTYMISQNKCVHLLIGFLSFFTGCLLFYAIIVYHHKLNKGQYVYFVNYKTKWIVFTIYLTIALFLTCGIFSFIQCTNRCACMKFCVPHTESSSKAMTQNTIQVISLPPRSEMPRSIVHMHSDMPGKEGSISKPHLQSRRVTWAL.

Over 1-13 the chain is Cytoplasmic; sequence MMRIPNRSIQAAN. A helical transmembrane segment spans residues 14 to 34; that stretch reads IFFSSGAILLLIAGLIMENWV. The Extracellular segment spans residues 35 to 71; that stretch reads ELIPKVRKDKVTHSPWLGCCPPFWPEESLEAIRRMMM. A helical transmembrane segment spans residues 72–92; it reads MSLNISIYLNLIIGLQFTYMI. The Cytoplasmic portion of the chain corresponds to 93-99; sequence SQNKCVH. The helical transmembrane segment at 100–120 threads the bilayer; it reads LLIGFLSFFTGCLLFYAIIVY. At 121-139 the chain is on the extracellular side; the sequence is HHKLNKGQYVYFVNYKTKW. A helical transmembrane segment spans residues 140-160; it reads IVFTIYLTIALFLTCGIFSFI. Over 161–231 the chain is Cytoplasmic; the sequence is QCTNRCACMK…LQSRRVTWAL (71 aa). Residues 225 to 229 carry the RVxF motif; sequence RRVTW.

As to quaternary structure, interacts (via RVxF motif) with PPP1CC. In terms of tissue distribution, expressed in testis, specifically in spermatocytes and round spermatids.

The protein localises to the cytoplasmic vesicle. It localises to the secretory vesicle. Its subcellular location is the acrosome membrane. In terms of biological role, probably inhibits protein phosphatase 1 (PP1) in sperm via binding to catalytic subunit PPP1CC. The chain is Transmembrane protein 225 (Tmem225) from Rattus norvegicus (Rat).